Consider the following 620-residue polypeptide: Acetylcholinesterase 1 (620 aa).

The signal sequence occupies residues 1 to 31; the sequence is MRNSLLFFIFLPSTILAVDLIHLHDGSPLFG. An N-linked (GlcNAc...) asparagine glycan is attached at asparagine 74. Cysteines 82 and 109 form a disulfide. The active-site Acyl-ester intermediate is the serine 216. A disulfide bond links cysteine 270 and cysteine 286. The N-linked (GlcNAc...) asparagine glycan is linked to asparagine 272. Active-site charge relay system residues include glutamate 346 and histidine 468. Cysteines 430 and 558 form a disulfide. Asparagine 486 and asparagine 536 each carry an N-linked (GlcNAc...) asparagine glycan.

It belongs to the type-B carboxylesterase/lipase family. In terms of assembly, oligomer composed of disulfide-linked homodimers.

The protein localises to the synapse. The protein resides in the secreted. Its subcellular location is the cell membrane. The enzyme catalyses acetylcholine + H2O = choline + acetate + H(+). Rapidly hydrolyzes acetylcholine and releases choline into the synapse. It can hydrolyze propionylcholine and butyrylthiocholine in vitro. The protein is Acetylcholinesterase 1 (ace-1) of Caenorhabditis elegans.